We begin with the raw amino-acid sequence, 239 residues long: NAD-dependent protein deacylase (239 aa).

The region spanning 1–239 is the Deacetylase sirtuin-type domain; the sequence is MNVLILTGAG…PKLLNHFSAM (239 aa). NAD(+) is bound at residue 8–27; that stretch reads GAGISAESGIPTFRDANGLW. Substrate is bound by residues tyrosine 52 and arginine 55. Residue 93–96 coordinates NAD(+); it reads QNID. Histidine 111 (proton acceptor) is an active-site residue. NAD(+)-binding positions include 182-184, 207-209, and alanine 225; these read GTS and NLD.

The protein belongs to the sirtuin family. Class III subfamily.

Its subcellular location is the cytoplasm. It carries out the reaction N(6)-acetyl-L-lysyl-[protein] + NAD(+) + H2O = 2''-O-acetyl-ADP-D-ribose + nicotinamide + L-lysyl-[protein]. It catalyses the reaction N(6)-succinyl-L-lysyl-[protein] + NAD(+) + H2O = 2''-O-succinyl-ADP-D-ribose + nicotinamide + L-lysyl-[protein]. NAD-dependent lysine deacetylase and desuccinylase that specifically removes acetyl and succinyl groups on target proteins. Modulates the activities of several proteins which are inactive in their acylated form. This is NAD-dependent protein deacylase from Rhodopirellula baltica (strain DSM 10527 / NCIMB 13988 / SH1).